The sequence spans 283 residues: Elongation factor Ts (283 aa).

Positions 80 to 83 are involved in Mg(2+) ion dislocation from EF-Tu; sequence TDFV.

Belongs to the EF-Ts family.

The protein localises to the cytoplasm. In terms of biological role, associates with the EF-Tu.GDP complex and induces the exchange of GDP to GTP. It remains bound to the aminoacyl-tRNA.EF-Tu.GTP complex up to the GTP hydrolysis stage on the ribosome. This Salmonella gallinarum (strain 287/91 / NCTC 13346) protein is Elongation factor Ts.